The following is a 270-amino-acid chain: SAGA-associated factor 29 homolog A (270 aa).

S2 carries the post-translational modification N-acetylserine. The tract at residues 85–113 (LPSGPTGQQRRKLEGNEQKRKRMKVDTDV) is disordered. Residues 95 to 113 (RKLEGNEQKRKRMKVDTDV) show a composition bias toward basic and acidic residues. Residues 125–270 (EAYASLKGEQ…VVALPEGHRQ (146 aa)) form the SGF29 C-terminal domain. 2 histone H3K4me3 N-terminus binding regions span residues 168 to 170 (DEE) and 217 to 220 (GTTA). A histone H3K4me3 binding region spans residues 242-245 (FDDD).

It belongs to the SGF29 family. As to expression, expressed in roots, rosette leaves, cauline leaves, stems and flowers.

Its subcellular location is the nucleus. In terms of biological role, chromatin reader component of the transcription regulatory histone acetylation (HAT) complex SAGA. Involved in salt stress tolerance. Enhances the effect of ADA2B in the positive regulation of salt-induced gene expression. This chain is SAGA-associated factor 29 homolog A, found in Arabidopsis thaliana (Mouse-ear cress).